The primary structure comprises 225 residues: Uracil-DNA glycosylase (225 aa).

Catalysis depends on aspartate 65, which acts as the Proton acceptor.

This sequence belongs to the uracil-DNA glycosylase (UDG) superfamily. UNG family.

It localises to the cytoplasm. It carries out the reaction Hydrolyzes single-stranded DNA or mismatched double-stranded DNA and polynucleotides, releasing free uracil.. In terms of biological role, excises uracil residues from the DNA which can arise as a result of misincorporation of dUMP residues by DNA polymerase or due to deamination of cytosine. This is Uracil-DNA glycosylase from Clostridium perfringens (strain 13 / Type A).